A 458-amino-acid polypeptide reads, in one-letter code: Argininosuccinate lyase (458 aa).

This sequence belongs to the lyase 1 family. Argininosuccinate lyase subfamily.

The protein resides in the cytoplasm. The enzyme catalyses 2-(N(omega)-L-arginino)succinate = fumarate + L-arginine. The protein operates within amino-acid biosynthesis; L-arginine biosynthesis; L-arginine from L-ornithine and carbamoyl phosphate: step 3/3. The protein is Argininosuccinate lyase of Actinobacillus pleuropneumoniae serotype 5b (strain L20).